The sequence spans 89 residues: Long neurotoxin 1 (89 aa).

Residues methionine 1 to serine 21 form the signal peptide. 4 disulfide bridges follow: cysteine 24-cysteine 41, cysteine 34-cysteine 58, cysteine 62-cysteine 74, and cysteine 75-cysteine 80.

It belongs to the three-finger toxin family. Long-chain subfamily. Type II alpha-neurotoxin sub-subfamily. In terms of tissue distribution, expressed by the venom gland.

Its subcellular location is the secreted. Binds with high affinity to muscular (alpha-1/CHRNA1) and neuronal (alpha-7/CHRNA7) nicotinic acetylcholine receptor (nAChR) and inhibits acetylcholine from binding to the receptor, thereby impairing neuromuscular and neuronal transmission. In Pseudonaja textilis (Eastern brown snake), this protein is Long neurotoxin 1.